The primary structure comprises 501 residues: MSSPAQPAVPAPLANLKIQHTKIFINNEWHDSVSGKKFPVLNPATEEVICHVEEGDKADVDKAVKAARQAFQIGSPWRTMDASERGRLLNKLADLMERDRLLLATIEAINGGKVFANAYLSDLGGSIKALKYCAGWADKIHGQTIPSDGDIFTFTRREPIGVCGQIIPWNFPLLMFIWKIGPALSCGNTVVVKPAEQTPLTALHMASLIKEAGFPPGVVNIVPGYGPTAGAAISSHMDVDKVAFTGSTQVGKLIKEAAGKSNLKRVTLELGGKSPCIVFADADLDIAVEFAHHGVFYHQGQCCVAASRIFVEESVYDEFVRKSVERAKKYVLGNPLTQGINQGPQIDKEQHDKILDLIESGKKEGAKLECGGGRWGNKGFFVQPTVFSNVTDEMRIAKEEIFGPVQQIMKFKSIDDVIKRANNTTYGLAAGVFTKDLDRAITVSSALQAGVVWVNCYMILSAQCPFGGFKMSGNGRELGEHGLYEYTELKTVAMKISQKNS.

The residue at position 2 (Ser-2) is an N-acetylserine. Residues Lys-91 and Lys-128 each carry the N6-acetyllysine modification. NAD(+) contacts are provided by residues 167–170, 193–196, 226–227, and 246–247; these read IPWN, KPAE, GP, and GS. Lys-252 carries the N6-acetyllysine modification. Glu-269 acts as the Proton acceptor in catalysis. 269-271 lines the NAD(+) pocket; the sequence is ELG. Residue Cys-303 is the Nucleophile of the active site. The segment at 336 to 501 is mediates interaction with PRMT3; the sequence is LTQGINQGPQ…VAMKISQKNS (166 aa). Thr-337 bears the Phosphothreonine mark. 349 to 353 is a binding site for NAD(+); it reads EQHDK. 2 positions are modified to N6-acetyllysine: Lys-353 and Lys-367. 400–402 contributes to the NAD(+) binding site; the sequence is EIF. N6-acetyllysine is present on Lys-410. The residue at position 413 (Ser-413) is a Phosphoserine. N6-acetyllysine is present on residues Lys-419, Lys-435, and Lys-495.

This sequence belongs to the aldehyde dehydrogenase family. As to quaternary structure, homotetramer. Interacts with PRMT3; the interaction is direct, inhibits ALDH1A1 aldehyde dehydrogenase activity and is independent of the methyltransferase activity of PRMT3. Post-translationally, the N-terminus is blocked most probably by acetylation. Strongly expressed in kidney, lung, testis, intestine, stomach, and trachea, but weakly in the liver.

It localises to the cytoplasm. It is found in the cytosol. Its subcellular location is the cell projection. The protein resides in the axon. The enzyme catalyses an aldehyde + NAD(+) + H2O = a carboxylate + NADH + 2 H(+). The catalysed reaction is all-trans-retinal + NAD(+) + H2O = all-trans-retinoate + NADH + 2 H(+). It carries out the reaction 9-cis-retinal + NAD(+) + H2O = 9-cis-retinoate + NADH + 2 H(+). It catalyses the reaction 11-cis-retinal + NAD(+) + H2O = 11-cis-retinoate + NADH + 2 H(+). The enzyme catalyses 13-cis-retinal + NAD(+) + H2O = 13-cis-retinoate + NADH + 2 H(+). The catalysed reaction is 3-deoxyglucosone + NAD(+) + H2O = 2-dehydro-3-deoxy-D-gluconate + NADH + 2 H(+). It carries out the reaction (E)-4-hydroxynon-2-enal + NAD(+) + H2O = (E)-4-hydroxynon-2-enoate + NADH + 2 H(+). It catalyses the reaction malonaldehyde + NAD(+) + H2O = 3-oxopropanoate + NADH + 2 H(+). The enzyme catalyses hexanal + NAD(+) + H2O = hexanoate + NADH + 2 H(+). The catalysed reaction is propanal + NAD(+) + H2O = propanoate + NADH + 2 H(+). It carries out the reaction acetaldehyde + NAD(+) + H2O = acetate + NADH + 2 H(+). It catalyses the reaction benzaldehyde + NAD(+) + H2O = benzoate + NADH + 2 H(+). The enzyme catalyses 4-aminobutanal + NAD(+) + H2O = 4-aminobutanoate + NADH + 2 H(+). The protein operates within cofactor metabolism; retinol metabolism. Its activity is regulated as follows. Inhibited by chloral hydrate. Functionally, cytosolic dehydrogenase that catalyzes the irreversible oxidation of a wide range of aldehydes to their corresponding carboxylic acid. Functions downstream of retinol dehydrogenases and catalyzes the oxidation of retinaldehyde into retinoic acid, the second step in the oxidation of retinol/vitamin A into retinoic acid. This pathway is crucial to control the levels of retinol and retinoic acid, two important molecules which excess can be teratogenic and cytotoxic. Also oxidizes aldehydes resulting from lipid peroxidation like (E)-4-hydroxynon-2-enal/HNE, malonaldehyde and hexanal that form protein adducts and are highly cytotoxic. By participating for instance to the clearance of (E)-4-hydroxynon-2-enal/HNE in the lens epithelium prevents the formation of HNE-protein adducts and lens opacification. Functions also downstream of fructosamine-3-kinase in the fructosamine degradation pathway by catalyzing the oxidation of 3-deoxyglucosone, the carbohydrate product of fructosamine 3-phosphate decomposition, which is itself a potent glycating agent that may react with lysine and arginine side-chains of proteins. Also has an aminobutyraldehyde dehydrogenase activity and is probably part of an alternative pathway for the biosynthesis of GABA/4-aminobutanoate in midbrain, thereby playing a role in GABAergic synaptic transmission. The sequence is that of Aldehyde dehydrogenase 1A1 from Rattus norvegicus (Rat).